The following is a 198-amino-acid chain: V-type proton ATPase subunit E (198 aa).

The protein belongs to the V-ATPase E subunit family.

Produces ATP from ADP in the presence of a proton gradient across the membrane. The sequence is that of V-type proton ATPase subunit E from Borrelia hermsii (strain HS1 / DAH).